A 310-amino-acid polypeptide reads, in one-letter code: Aspartate carbamoyltransferase catalytic subunit 1 (310 aa).

2 residues coordinate carbamoyl phosphate: Arg-55 and Thr-56. An L-aspartate-binding site is contributed by Lys-85. Residues Arg-106, His-134, and Gln-137 each contribute to the carbamoyl phosphate site. L-aspartate-binding residues include Arg-167 and Arg-228. The carbamoyl phosphate site is built by Leu-266 and Pro-267.

This sequence belongs to the aspartate/ornithine carbamoyltransferase superfamily. ATCase family. As to quaternary structure, heterododecamer (2C3:3R2) of six catalytic PyrB chains organized as two trimers (C3), and six regulatory PyrI chains organized as three dimers (R2).

The enzyme catalyses carbamoyl phosphate + L-aspartate = N-carbamoyl-L-aspartate + phosphate + H(+). It functions in the pathway pyrimidine metabolism; UMP biosynthesis via de novo pathway; (S)-dihydroorotate from bicarbonate: step 2/3. Its function is as follows. Catalyzes the condensation of carbamoyl phosphate and aspartate to form carbamoyl aspartate and inorganic phosphate, the committed step in the de novo pyrimidine nucleotide biosynthesis pathway. The polypeptide is Aspartate carbamoyltransferase catalytic subunit 1 (Shewanella halifaxensis (strain HAW-EB4)).